Consider the following 204-residue polypeptide: MAGNGSAPDTATHQVRQFDQARAEAAVRELLFAIGEDPDRHGLAETPARVARAYREMFAGLYTDPDSVLNTMFDEEHDELVLVKEIPLYSTCEHHLVSFHGVAHVGYIPGNDGRVTGLSKIARLVDLYAKRPQVQERLTSQIADALVKKLNPRGVIVVVEAEHLCMAMRGVRKPGAVTTTSAVRGLFKTNAASRAEALDLILRK.

Zn(2+) is bound by residues Cys-92, His-95, and Cys-165.

Belongs to the GTP cyclohydrolase I family. In terms of assembly, homomer.

It carries out the reaction GTP + H2O = 7,8-dihydroneopterin 3'-triphosphate + formate + H(+). Its pathway is cofactor biosynthesis; 7,8-dihydroneopterin triphosphate biosynthesis; 7,8-dihydroneopterin triphosphate from GTP: step 1/1. The chain is GTP cyclohydrolase 1 from Mycolicibacterium paratuberculosis (strain ATCC BAA-968 / K-10) (Mycobacterium paratuberculosis).